We begin with the raw amino-acid sequence, 463 residues long: Glutamyl-tRNA reductase (463 aa).

Residues 49–52 (TCNR), S109, 114–116 (EQQ), and Q120 contribute to the substrate site. The active-site Nucleophile is C50. 196-201 (GAGAMS) contributes to the NADP(+) binding site.

Belongs to the glutamyl-tRNA reductase family. As to quaternary structure, homodimer.

The enzyme catalyses (S)-4-amino-5-oxopentanoate + tRNA(Glu) + NADP(+) = L-glutamyl-tRNA(Glu) + NADPH + H(+). Its pathway is porphyrin-containing compound metabolism; protoporphyrin-IX biosynthesis; 5-aminolevulinate from L-glutamyl-tRNA(Glu): step 1/2. Catalyzes the NADPH-dependent reduction of glutamyl-tRNA(Glu) to glutamate 1-semialdehyde (GSA). The protein is Glutamyl-tRNA reductase of Corynebacterium glutamicum (strain ATCC 13032 / DSM 20300 / JCM 1318 / BCRC 11384 / CCUG 27702 / LMG 3730 / NBRC 12168 / NCIMB 10025 / NRRL B-2784 / 534).